We begin with the raw amino-acid sequence, 294 residues long: Phosphatidylserine decarboxylase proenzyme (294 aa).

Active-site charge relay system; for autoendoproteolytic cleavage activity residues include Asp92, His149, and Ser252. The active-site Schiff-base intermediate with substrate; via pyruvic acid; for decarboxylase activity is Ser252. Ser252 is modified (pyruvic acid (Ser); by autocatalysis).

The protein belongs to the phosphatidylserine decarboxylase family. PSD-B subfamily. Prokaryotic type I sub-subfamily. Heterodimer of a large membrane-associated beta subunit and a small pyruvoyl-containing alpha subunit. The cofactor is pyruvate. In terms of processing, is synthesized initially as an inactive proenzyme. Formation of the active enzyme involves a self-maturation process in which the active site pyruvoyl group is generated from an internal serine residue via an autocatalytic post-translational modification. Two non-identical subunits are generated from the proenzyme in this reaction, and the pyruvate is formed at the N-terminus of the alpha chain, which is derived from the carboxyl end of the proenzyme. The autoendoproteolytic cleavage occurs by a canonical serine protease mechanism, in which the side chain hydroxyl group of the serine supplies its oxygen atom to form the C-terminus of the beta chain, while the remainder of the serine residue undergoes an oxidative deamination to produce ammonia and the pyruvoyl prosthetic group on the alpha chain. During this reaction, the Ser that is part of the protease active site of the proenzyme becomes the pyruvoyl prosthetic group, which constitutes an essential element of the active site of the mature decarboxylase.

It is found in the cell membrane. The enzyme catalyses a 1,2-diacyl-sn-glycero-3-phospho-L-serine + H(+) = a 1,2-diacyl-sn-glycero-3-phosphoethanolamine + CO2. Its pathway is phospholipid metabolism; phosphatidylethanolamine biosynthesis; phosphatidylethanolamine from CDP-diacylglycerol: step 2/2. In terms of biological role, catalyzes the formation of phosphatidylethanolamine (PtdEtn) from phosphatidylserine (PtdSer). In Bordetella avium (strain 197N), this protein is Phosphatidylserine decarboxylase proenzyme.